Consider the following 240-residue polypeptide: Large ribosomal subunit protein uL2 (240 aa).

Polar residues predominate over residues Met-1–Arg-10. Disordered regions lie at residues Met-1–Pro-20 and Phe-204–Arg-240.

Belongs to the universal ribosomal protein uL2 family. Part of the 50S ribosomal subunit. Forms a bridge to the 30S subunit in the 70S ribosome.

Functionally, one of the primary rRNA binding proteins. Required for association of the 30S and 50S subunits to form the 70S ribosome, for tRNA binding and peptide bond formation. It has been suggested to have peptidyltransferase activity; this is somewhat controversial. Makes several contacts with the 16S rRNA in the 70S ribosome. This is Large ribosomal subunit protein uL2 from Methanocorpusculum labreanum (strain ATCC 43576 / DSM 4855 / Z).